The sequence spans 214 residues: tRNA (guanine-N(7)-)-methyltransferase (214 aa).

Positions 43, 68, 95, and 117 each coordinate S-adenosyl-L-methionine. Asp117 is an active-site residue. Residues Lys121, Asp153, and 190 to 193 (TEYE) contribute to the substrate site.

The protein belongs to the class I-like SAM-binding methyltransferase superfamily. TrmB family.

The catalysed reaction is guanosine(46) in tRNA + S-adenosyl-L-methionine = N(7)-methylguanosine(46) in tRNA + S-adenosyl-L-homocysteine. It participates in tRNA modification; N(7)-methylguanine-tRNA biosynthesis. Catalyzes the formation of N(7)-methylguanine at position 46 (m7G46) in tRNA. In Staphylococcus aureus (strain USA300), this protein is tRNA (guanine-N(7)-)-methyltransferase.